Reading from the N-terminus, the 83-residue chain is Small ribosomal subunit protein uS17 (83 aa).

Belongs to the universal ribosomal protein uS17 family. In terms of assembly, part of the 30S ribosomal subunit.

Its function is as follows. One of the primary rRNA binding proteins, it binds specifically to the 5'-end of 16S ribosomal RNA. The protein is Small ribosomal subunit protein uS17 of Aliarcobacter butzleri (strain RM4018) (Arcobacter butzleri).